The sequence spans 376 residues: Actin, cytoplasmic (376 aa).

The protein belongs to the actin family.

It is found in the cytoplasm. It localises to the cytoskeleton. It carries out the reaction ATP + H2O = ADP + phosphate + H(+). Actins are highly conserved proteins that are involved in various types of cell motility and are ubiquitously expressed in all eukaryotic cells. In Tetrahymena pyriformis, this protein is Actin, cytoplasmic.